We begin with the raw amino-acid sequence, 356 residues long: Glutamine synthetase nodule isozyme (356 aa).

A GS beta-grasp domain is found at 19 to 99; the sequence is IIAEYIWVGG…VICDVYTPAG (81 aa). The GS catalytic domain maps to 106-356; it reads KRHNAAKIFS…IAETTLLWKP (251 aa).

Belongs to the glutamine synthetase family. In terms of assembly, homooctamer. In terms of tissue distribution, found at highest levels in root nodules.

Its subcellular location is the cytoplasm. It catalyses the reaction L-glutamate + NH4(+) + ATP = L-glutamine + ADP + phosphate + H(+). This chain is Glutamine synthetase nodule isozyme (GS1), found in Medicago sativa (Alfalfa).